Here is a 381-residue protein sequence, read N- to C-terminus: Putative glutamate--cysteine ligase 2 (381 aa).

This sequence belongs to the glutamate--cysteine ligase type 2 family. YbdK subfamily.

The catalysed reaction is L-cysteine + L-glutamate + ATP = gamma-L-glutamyl-L-cysteine + ADP + phosphate + H(+). Its function is as follows. ATP-dependent carboxylate-amine ligase which exhibits weak glutamate--cysteine ligase activity. The protein is Putative glutamate--cysteine ligase 2 of Polaromonas naphthalenivorans (strain CJ2).